The sequence spans 1179 residues: Tubulin glycylase 3B (1179 aa).

Positions N177 to K199 are enriched in polar residues. Disordered regions lie at residues N177–G208, Q250–S278, K592–Q625, and Q853–D890. Residues K592 to D601 are compositionally biased toward basic and acidic residues. Polar residues-rich tracts occupy residues K614–Q625 and A881–D890. The TTL domain maps to F790 to N1152. ATP is bound by residues Q965–I968, K978, and D980.

It localises to the cell projection. Its subcellular location is the cilium. The protein localises to the cytoplasm. The protein resides in the cytoskeleton. It is found in the cilium axoneme. Polyglycylase which modifies tubulin, generating side chains of glycine on the gamma-carboxyl groups of specific glutamate residues within the C-terminal tail of tubulin. Polyglycylates tubulin, with a preference for alpha-tubulin toward beta-tubulin. This Tetrahymena thermophila (strain SB210) protein is Tubulin glycylase 3B (TTLL3B).